The following is a 481-amino-acid chain: MEMVLPVANATAAALARVSAMFNAPLARAVVFGIHIDGHLVVEGLLIAAILFQLSRKSYKPPKKPLTEREVDELCDEWQPEPLCPPIKEGARIEAPTLESAAGPHTIVDGKEVVNFASANYLGLIGNEKILDSCIGSVEKYGVGSCGPRGFYGTIDVHLDCETKIAKFLGTQDSILYSYGISTIFSVIPAFCKKGDIIVADEGVHWAVQNGLQLSRSTVVYFKHNDMASLASTLEKLTHGNKRTEKIRRYIVVEAIYQNSGQIAPLDEIVRLKEKYRFRVILEESHSFGVLGKSGRGLAEHYGVPIEKIDIITAGMGNALATDGGFCTGSIRVVDHQRLSSSGYVFSASLPPYLASAAISAVDHLEENPSVLANLRSNITLLHKELSDVQGLEIASNILSPIVFLKLKTSTGSAVADLELLEVISEKVLKEDSVFIAATKRSSLDKCRLPVGIRLFVSAGHTESDILKVSESLKRVAASVL.

Residues 32–52 (FGIHIDGHLVVEGLLIAAILF) form a helical membrane-spanning segment.

The protein belongs to the class-II pyridoxal-phosphate-dependent aminotransferase family. As to quaternary structure, heterodimer with LCB2. Component of the serine palmitoyltransferase (SPT) complex, composed of LCB1 and LCB2. Pyridoxal 5'-phosphate serves as cofactor.

The protein localises to the endoplasmic reticulum membrane. The catalysed reaction is L-serine + hexadecanoyl-CoA + H(+) = 3-oxosphinganine + CO2 + CoA. Its pathway is lipid metabolism; sphingolipid metabolism. Its function is as follows. Serine palmitoyltransferase (SPT). The heterodimer formed with LCB2 constitutes the catalytic core. The sequence is that of Long chain base biosynthesis protein 1b from Oryza sativa subsp. japonica (Rice).